We begin with the raw amino-acid sequence, 507 residues long: MSLQWLQQTRHELSWTWILLTTCIALTSPLVLKGIYNVYFHPLRNIPGPKLAALTDFYAFYWNWIRDEGYSKQFSRLHEQYNSPIIRIGPNNVHTTQVEFYDVIFKSGSKWLKDKSFYKYFNGLDAMIEPYQYRTYRTHLAPLYAQRAIDGLAPKLRSDLTNSASGMMRQTENGQTVNMAKVLRTLSTSMILHNLFSLDISLNDGDEYHPFLEAFEQLMTQSWLFVTYPMVPMVLSLIPGTSFARFNSSYTTFSNYCTAWNDEDMRKQRESEGQSTRDSHTRRYLSLKDDDARKKTAIPYPLDDVFNFVAGGSDTTAYTTACAFYHILSSPTVRENLVVELDEHSSIIRDEFDYNKIQNLPYLNAVIKETLRISVPVPGSLPRIVPQGGITIGSFSLPAGTGVSITQQAISFNEKIFPLPHSFLPERWIGPKSVGLDKWNIAFSRGPRQCIGTTLAYLELRCVIAYFFSRFDMALTGNCGDQLRWVDRFVAVNLDDVEVQILADRWT.

Residues 15 to 35 form a helical membrane-spanning segment; it reads WTWILLTTCIALTSPLVLKGI. N247 carries N-linked (GlcNAc...) asparagine glycosylation. C450 provides a ligand contact to heme.

This sequence belongs to the cytochrome P450 family. Heme is required as a cofactor.

It is found in the membrane. It participates in alkaloid biosynthesis; ergot alkaloid biosynthesis. Cytochrome P450 monooxygenase; part of the gene cluster that mediates the biosynthesis of fungal ergot alkaloid. DmaW catalyzes the first step of ergot alkaloid biosynthesis by condensing dimethylallyl diphosphate (DMAP) and tryptophan to form 4-dimethylallyl-L-tryptophan. The second step is catalyzed by the methyltransferase easF that methylates 4-dimethylallyl-L-tryptophan in the presence of S-adenosyl-L-methionine, resulting in the formation of 4-dimethylallyl-L-abrine. The catalase easC and the FAD-dependent oxidoreductase easE then transform 4-dimethylallyl-L-abrine to chanoclavine-I which is further oxidized by easD in the presence of NAD(+), resulting in the formation of chanoclavine-I aldehyde. Agroclavine dehydrogenase easG then mediates the conversion of chanoclavine-I aldehyde to agroclavine via a non-enzymatic adduct reaction: the substrate is an iminium intermediate that is formed spontaneously from chanoclavine-I aldehyde in the presence of glutathione. The presence of easA is not required to complete this reaction. Further conversion of agroclavine to paspalic acid is a two-step process involving oxidation of agroclavine to elymoclavine and of elymoclavine to paspalic acid, the second step being performed by the elymoclavine oxidase cloA. Paspalic acid is then further converted to D-lysergic acid. Ergopeptines are assembled from D-lysergic acid and three different amino acids by the D-lysergyl-peptide-synthetases composed each of a monomudular and a trimodular nonribosomal peptide synthetase subunit. LpsB and lpsC encode the monomodular subunits responsible for D-lysergic acid activation and incorporation into the ergopeptine backbone. LpsA1 and A2 subunits encode the trimodular nonribosomal peptide synthetase assembling the tripeptide portion of ergopeptines. LpsA1 is responsible for formation of the major ergopeptine, ergotamine, and lpsA2 for alpha-ergocryptine, the minor ergopeptine of the total alkaloid mixture elaborated by C.purpurea. D-lysergyl-tripeptides are assembled by the nonribosomal peptide synthetases and released as N-(D-lysergyl-aminoacyl)-lactams. Cyclolization of the D-lysergyl-tripeptides is performed by the Fe(2+)/2-ketoglutarate-dependent dioxygenase easH which introduces a hydroxyl group into N-(D-lysergyl-aminoacyl)-lactam at alpha-C of the aminoacyl residue followed by spontaneous condensation with the terminal lactam carbonyl group. In Claviceps purpurea (Ergot fungus), this protein is Cytochrome P450 monooxygenase cloA.